The primary structure comprises 779 residues: ATP-dependent RNA helicase SUPV3L1, mitochondrial (779 aa).

The transit peptide at 1 to 40 (MSLPRCTLLWARLPAGRGAGPRAAPCSALRALVGSFPGAS) directs the protein to the mitochondrion. An N6-acetyllysine modification is found at lysine 99. A Helicase ATP-binding domain is found at 194-334 (EARARQRKII…AINLVSELLY (141 aa)). 207-214 (GPTNSGKT) is a binding site for ATP. One can recognise a Helicase C-terminal domain in the interval 353 to 521 (VLDHALESLD…PTAEQIEMFA (169 aa)). The tract at residues 650–779 (PDSSLVRSLQ…RRKKKDPDSD (130 aa)) is interaction with LAMTOR5, important for protein stability. A compositionally biased stretch (polar residues) spans 693-703 (SGDQSRLSGAS). Disordered stretches follow at residues 693-732 (SGDQ…KELP) and 754-779 (EWLT…PDSD). At serine 725 the chain carries Phosphoserine. The segment covering 761–779 (EHSREKVGTRRKKKDPDSD) has biased composition (basic and acidic residues).

Belongs to the helicase family. As to quaternary structure, homodimer; in free form. Component of the mitochondrial degradosome (mtEXO) complex which is a heteropentamer containing 2 copies of SUPV3L1 and 3 copies of PNPT1. As part of mitochondrial degradosome complex, interacts with GRSF1 in a RNA-dependent manner; the interaction enhances the activity of the complex. Interacts with LAMTOR5/HBXIP, WRN and BLM. Mg(2+) serves as cofactor. Mn(2+) is required as a cofactor.

The protein localises to the nucleus. Its subcellular location is the mitochondrion matrix. The protein resides in the mitochondrion nucleoid. It catalyses the reaction ATP + H2O = ADP + phosphate + H(+). Its activity is regulated as follows. Helicase activity toward DNA substrate is inhibited by micromolar concentrations of 5,6-dichloro-1-(beta-D-ribofuranosyl)benzotriazole (DRBT) and 4,5,6,7-tetrabromobenzotriazole (TBBT). Helicase activity toward RNA substrate is inhibited by elevated concentrations of TBBT. Inhibited by some ring-expanded nucleoside analogs. Major helicase player in mitochondrial RNA metabolism. Component of the mitochondrial degradosome (mtEXO) complex, that degrades 3' overhang double-stranded RNA with a 3'-to-5' directionality in an ATP-dependent manner. Involved in the degradation of non-coding mitochondrial transcripts (MT-ncRNA) and tRNA-like molecules. ATPase and ATP-dependent multisubstrate helicase, able to unwind double-stranded (ds) DNA and RNA, and RNA/DNA heteroduplexes in the 5'-to-3' direction. Plays a role in the RNA surveillance system in mitochondria; regulates the stability of mature mRNAs, the removal of aberrantly formed mRNAs and the rapid degradation of non coding processing intermediates. Also implicated in recombination and chromatin maintenance pathways. May protect cells from apoptosis. Associates with mitochondrial DNA. This is ATP-dependent RNA helicase SUPV3L1, mitochondrial (Supv3l1) from Mus musculus (Mouse).